The primary structure comprises 70 residues: Frenatin 4.1 (70 aa).

A signal peptide spans Met1–Cys22. Residues Glu23 to Arg46 constitute a propeptide that is removed on maturation. Residue Lys68 is modified to Lysine amide.

The protein belongs to the frog skin active peptide (FSAP) family. Frenatin subfamily. As to expression, expressed by the skin glands.

The protein localises to the secreted. It is found in the target cell membrane. Peptide with unknown function. Does not show antimicrobial activity against S.aureus (MIC&gt;512 ug/mL), E.coli (MIC&gt;512 ug/mL) and C.albicans (MIC&gt;512 ug/mL). Does not show hemolytic activity. Its function is as follows. Antimicrobial peptide with activity against E.coli (MIC=128 ug/mL or 54 uM) and C.albicans (MIC=256 ug/mL or 108 uM). Does not show activity against S.aureus (MIC&gt;512 ug/mL). Does not show hemolytic activity. This Nyctimystes infrafrenatus (White-lipped tree frog) protein is Frenatin 4.1.